A 599-amino-acid chain; its full sequence is Sulfite reductase [NADPH] flavoprotein alpha-component (599 aa).

The region spanning 64-202 (ITLISASQTG…VAAQWRARIV (139 aa)) is the Flavodoxin-like domain. FMN contacts are provided by residues 70–75 (SQTGNA), 117–120 (STQG), and 153–162 (LGDTSYEFFC). The 215-residue stretch at 234 to 448 (EAPLRASLSV…IEHNDNFRLP (215 aa)) folds into the FAD-binding FR-type domain. Residues Thr322, Ala356, 386–389 (RLYS), 404–406 (TVG), Tyr410, and 419–422 (GGAS) contribute to the FAD site. Residues 519–520 (SR), 525–529 (KIYVQ), and Asp561 each bind NADP(+). Tyr599 serves as a coordination point for FAD.

This sequence belongs to the NADPH-dependent sulphite reductase flavoprotein subunit CysJ family. It in the N-terminal section; belongs to the flavodoxin family. In the C-terminal section; belongs to the flavoprotein pyridine nucleotide cytochrome reductase family. Alpha(8)-beta(8). The alpha component is a flavoprotein, the beta component is a hemoprotein. FAD serves as cofactor. The cofactor is FMN.

The catalysed reaction is hydrogen sulfide + 3 NADP(+) + 3 H2O = sulfite + 3 NADPH + 4 H(+). It participates in sulfur metabolism; hydrogen sulfide biosynthesis; hydrogen sulfide from sulfite (NADPH route): step 1/1. Component of the sulfite reductase complex that catalyzes the 6-electron reduction of sulfite to sulfide. This is one of several activities required for the biosynthesis of L-cysteine from sulfate. The flavoprotein component catalyzes the electron flow from NADPH -&gt; FAD -&gt; FMN to the hemoprotein component. This Salmonella arizonae (strain ATCC BAA-731 / CDC346-86 / RSK2980) protein is Sulfite reductase [NADPH] flavoprotein alpha-component.